A 329-amino-acid chain; its full sequence is uncharacterized protein (329 aa).

Residues 109–147 are disordered; it reads KALGNDQTSSMTSSTTAVTVAKSGDGQQQTGEQKEEDWK. The span at 116 to 131 shows a compositional bias: low complexity; it reads TSSMTSSTTAVTVAKS.

This sequence to the C-terminal of MG321/MPN_456.

This is an uncharacterized protein from Mycoplasma pneumoniae (strain ATCC 29342 / M129 / Subtype 1) (Mycoplasmoides pneumoniae).